Here is a 66-residue protein sequence, read N- to C-terminus: Large ribosomal subunit protein bL35 (66 aa).

A compositionally biased stretch (basic residues) spans 1–26 (MPKMKTHRGGAKRVKRTGSGKLKRSR). 2 disordered regions span residues 1 to 28 (MPKMKTHRGGAKRVKRTGSGKLKRSRAY) and 36 to 55 (KSTKQKRGLRKASLVSKGDQ).

It belongs to the bacterial ribosomal protein bL35 family.

This chain is Large ribosomal subunit protein bL35, found in Macrococcus caseolyticus (strain JCSC5402) (Macrococcoides caseolyticum).